Reading from the N-terminus, the 396-residue chain is Mannonate dehydratase (396 aa).

The protein belongs to the mannonate dehydratase family. Requires Fe(2+) as cofactor. Mn(2+) serves as cofactor.

The enzyme catalyses D-mannonate = 2-dehydro-3-deoxy-D-gluconate + H2O. The protein operates within carbohydrate metabolism; pentose and glucuronate interconversion. Functionally, catalyzes the dehydration of D-mannonate. The chain is Mannonate dehydratase from Serratia proteamaculans (strain 568).